Consider the following 452-residue polypeptide: Phosphoglucosamine mutase (452 aa).

The active-site Phosphoserine intermediate is Ser-108. Positions 108, 247, 249, and 251 each coordinate Mg(2+). Ser-108 bears the Phosphoserine mark.

Belongs to the phosphohexose mutase family. Requires Mg(2+) as cofactor. Post-translationally, activated by phosphorylation.

It catalyses the reaction alpha-D-glucosamine 1-phosphate = D-glucosamine 6-phosphate. In terms of biological role, catalyzes the conversion of glucosamine-6-phosphate to glucosamine-1-phosphate. The sequence is that of Phosphoglucosamine mutase from Paraburkholderia xenovorans (strain LB400).